The primary structure comprises 211 residues: Pyridoxine/pyridoxamine 5'-phosphate oxidase (211 aa).

Substrate contacts are provided by residues 8–11 (RKNY) and K66. Residues 61–66 (RIVLLK), 76–77 (FT), K83, and Q105 each bind FMN. Substrate contacts are provided by Y123, R127, and S131. Residues 140–141 (QS) and W184 contribute to the FMN site. Substrate is bound at residue 190–192 (RLH). R194 contributes to the FMN binding site.

The protein belongs to the pyridoxamine 5'-phosphate oxidase family. As to quaternary structure, homodimer. The cofactor is FMN.

The enzyme catalyses pyridoxamine 5'-phosphate + O2 + H2O = pyridoxal 5'-phosphate + H2O2 + NH4(+). The catalysed reaction is pyridoxine 5'-phosphate + O2 = pyridoxal 5'-phosphate + H2O2. The protein operates within cofactor metabolism; pyridoxal 5'-phosphate salvage; pyridoxal 5'-phosphate from pyridoxamine 5'-phosphate: step 1/1. Its pathway is cofactor metabolism; pyridoxal 5'-phosphate salvage; pyridoxal 5'-phosphate from pyridoxine 5'-phosphate: step 1/1. Catalyzes the oxidation of either pyridoxine 5'-phosphate (PNP) or pyridoxamine 5'-phosphate (PMP) into pyridoxal 5'-phosphate (PLP). This Polynucleobacter asymbioticus (strain DSM 18221 / CIP 109841 / QLW-P1DMWA-1) (Polynucleobacter necessarius subsp. asymbioticus) protein is Pyridoxine/pyridoxamine 5'-phosphate oxidase.